Reading from the N-terminus, the 452-residue chain is Eukaryotic translation initiation factor 3 subunit E (452 aa).

A compositionally biased stretch (polar residues) spans 1 to 17 (MADNTPTTANDLLNDAT). Positions 1-23 (MADNTPTTANDLLNDATQAAAKS) are disordered. Residues 246 to 426 (PFFNHEPARD…GTVVMNHPPS (181 aa)) form the PCI domain.

Belongs to the eIF-3 subunit E family. In terms of assembly, component of the eukaryotic translation initiation factor 3 (eIF-3) complex.

It is found in the cytoplasm. Its function is as follows. Component of the eukaryotic translation initiation factor 3 (eIF-3) complex, which is involved in protein synthesis of a specialized repertoire of mRNAs and, together with other initiation factors, stimulates binding of mRNA and methionyl-tRNAi to the 40S ribosome. The eIF-3 complex specifically targets and initiates translation of a subset of mRNAs involved in cell proliferation. This chain is Eukaryotic translation initiation factor 3 subunit E (int6), found in Botryotinia fuckeliana (strain B05.10) (Noble rot fungus).